Consider the following 415-residue polypeptide: Serine hydroxymethyltransferase (415 aa).

Residues Leu-119 and 123-125 contribute to the (6S)-5,6,7,8-tetrahydrofolate site; that span reads GHL. Lys-228 carries the N6-(pyridoxal phosphate)lysine modification. 353 to 355 is a (6S)-5,6,7,8-tetrahydrofolate binding site; it reads SAF.

It belongs to the SHMT family. Homodimer. It depends on pyridoxal 5'-phosphate as a cofactor.

The protein localises to the cytoplasm. It carries out the reaction (6R)-5,10-methylene-5,6,7,8-tetrahydrofolate + glycine + H2O = (6S)-5,6,7,8-tetrahydrofolate + L-serine. It functions in the pathway one-carbon metabolism; tetrahydrofolate interconversion. The protein operates within amino-acid biosynthesis; glycine biosynthesis; glycine from L-serine: step 1/1. Catalyzes the reversible interconversion of serine and glycine with tetrahydrofolate (THF) serving as the one-carbon carrier. Also exhibits THF-independent aldolase activity toward beta-hydroxyamino acids, producing glycine and aldehydes, via a retro-aldol mechanism. The chain is Serine hydroxymethyltransferase from Halobacterium salinarum (strain ATCC 29341 / DSM 671 / R1).